Reading from the N-terminus, the 139-residue chain is Large ribosomal subunit protein uL16 (139 aa).

It belongs to the universal ribosomal protein uL16 family. In terms of assembly, part of the 50S ribosomal subunit.

Its function is as follows. Binds 23S rRNA and is also seen to make contacts with the A and possibly P site tRNAs. The chain is Large ribosomal subunit protein uL16 from Protochlamydia amoebophila (strain UWE25).